The following is a 446-amino-acid chain: Sensor-type histidine kinase PrrB (446 aa).

2 helical membrane passes run V19–V39 and L151–F171. One can recognise an HAMP domain in the interval A172 to N222. The region spanning V237 to S446 is the Histidine kinase domain. H240 carries the post-translational modification Phosphohistidine; by autocatalysis.

In terms of processing, autophosphorylated.

It is found in the cell membrane. It carries out the reaction ATP + protein L-histidine = ADP + protein N-phospho-L-histidine.. Functionally, member of the two-component regulatory system PrrB/PrrA that is involved specifically in early intracellular multiplication of Mycobacterium and is essential for its viability. Functions as a sensor protein kinase which is autophosphorylated at a histidine residue and transfers its phosphate group to the conserved aspartic acid residue in the regulatory domain of PrrA. In turn, PrrA binds to the upstream promoter regions of target genes including itself to positively regulate their expression. The sequence is that of Sensor-type histidine kinase PrrB (prrB) from Mycobacterium bovis (strain ATCC BAA-935 / AF2122/97).